The following is a 247-amino-acid chain: Small ribosomal subunit protein uS2 (247 aa).

Belongs to the universal ribosomal protein uS2 family.

The polypeptide is Small ribosomal subunit protein uS2 (Ralstonia pickettii (strain 12J)).